Reading from the N-terminus, the 308-residue chain is Transcription initiation factor IIB (308 aa).

2 repeat units span residues 124–207 (NELE…LREL) and 218–299 (DYVT…ELTQ).

This sequence belongs to the TFIIB family.

Functionally, stabilizes TBP binding to an archaeal box-A promoter. Also responsible for recruiting RNA polymerase II to the pre-initiation complex (DNA-TBP-TFIIB). In Sulfurisphaera tokodaii (strain DSM 16993 / JCM 10545 / NBRC 100140 / 7) (Sulfolobus tokodaii), this protein is Transcription initiation factor IIB.